The sequence spans 375 residues: Tyrosine--tRNA ligase (375 aa).

L-tyrosine-binding residues include Tyr-37, Tyr-168, Gln-172, Asp-175, and Gln-190. Positions 251-255 match the 'KMSKS' region motif; it reads KMSKS. Lys-254 contributes to the ATP binding site.

The protein belongs to the class-I aminoacyl-tRNA synthetase family. TyrS type 4 subfamily. As to quaternary structure, homodimer.

The protein resides in the cytoplasm. It catalyses the reaction tRNA(Tyr) + L-tyrosine + ATP = L-tyrosyl-tRNA(Tyr) + AMP + diphosphate + H(+). Catalyzes the attachment of tyrosine to tRNA(Tyr) in a two-step reaction: tyrosine is first activated by ATP to form Tyr-AMP and then transferred to the acceptor end of tRNA(Tyr). The sequence is that of Tyrosine--tRNA ligase from Thermococcus onnurineus (strain NA1).